Consider the following 181-residue polypeptide: Sporozoite-associated mosquito saliva protein 1 (181 aa).

Residues 1–24 (MNSSWRVVVFLGLVILCHSRRARA) form the signal peptide.

Salivary gland (at protein level). In terms of tissue distribution, (Microbial infection) Detected with Plasmodium berghei sporozoites isolated from the saliva of infected Anopheles gambiae mosquitoes (at protein level).

Its subcellular location is the secreted. Its function is as follows. Decreases host neutrophil chemotaxis induced by N-formylmethionine-leucyl-phenylalanine (fMLP). Functionally, (Microbial infection) Interacts with the surface of Plasmodium berghei sporozoites. Enhances sporozoite gliding activity. Enhances host hepatocyte traversal by sporozoites. The chain is Sporozoite-associated mosquito saliva protein 1 from Anopheles gambiae (African malaria mosquito).